A 509-amino-acid polypeptide reads, in one-letter code: Glutamate--tRNA ligase (509 aa).

Residues 20–30 carry the 'HIGH' region motif; it reads PSPTGFPHVGT. The Zn(2+) site is built by C117, C119, C144, and H146. The short motif at 261-265 is the 'KMSKS' region element; sequence KLSKR. K264 contacts ATP.

This sequence belongs to the class-I aminoacyl-tRNA synthetase family. Glutamate--tRNA ligase type 1 subfamily. In terms of assembly, monomer. Requires Zn(2+) as cofactor.

The protein localises to the cytoplasm. It carries out the reaction tRNA(Glu) + L-glutamate + ATP = L-glutamyl-tRNA(Glu) + AMP + diphosphate. In terms of biological role, catalyzes the attachment of glutamate to tRNA(Glu) in a two-step reaction: glutamate is first activated by ATP to form Glu-AMP and then transferred to the acceptor end of tRNA(Glu). This Psychrobacter cryohalolentis (strain ATCC BAA-1226 / DSM 17306 / VKM B-2378 / K5) protein is Glutamate--tRNA ligase.